We begin with the raw amino-acid sequence, 219 residues long: Proteasome subunit beta type-9 (219 aa).

Residues 1–20 constitute a propeptide, removed in mature form; the sequence is MLRTGAPNGDLPRAGEVHTG. Threonine 21 acts as the Nucleophile in catalysis. N6-acetyllysine occurs at positions 53 and 109.

This sequence belongs to the peptidase T1B family. As to quaternary structure, the 26S proteasome consists of a 20S proteasome core and two 19S regulatory subunits. The 20S proteasome core is composed of 28 subunits that are arranged in four stacked rings, resulting in a barrel-shaped structure. The two end rings are each formed by seven alpha subunits, and the two central rings are each formed by seven beta subunits. The catalytic chamber with the active sites is on the inside of the barrel. Component of the immunoproteasome, where it displaces the equivalent housekeeping subunit PSMB6. Component of the spermatoproteasome, a form of the proteasome specifically found in testis. Post-translationally, autocleaved. The resulting N-terminal Thr residue of the mature subunit is responsible for the nucleophile proteolytic activity.

The protein resides in the cytoplasm. The protein localises to the nucleus. It catalyses the reaction Cleavage of peptide bonds with very broad specificity.. Functionally, the proteasome is a multicatalytic proteinase complex which is characterized by its ability to cleave peptides with Arg, Phe, Tyr, Leu, and Glu adjacent to the leaving group at neutral or slightly basic pH. The proteasome has an ATP-dependent proteolytic activity. This subunit is involved in antigen processing to generate class I binding peptides. The protein is Proteasome subunit beta type-9 (PSMB9) of Bos taurus (Bovine).